Consider the following 626-residue polypeptide: Chaperone protein HtpG (626 aa).

An a; substrate-binding region spans residues 1–332 (MTNNDTPGMR…TEDLPLNVSR (332 aa)). A b region spans residues 333-546 (EVVQSSKVMA…KDSLDSSMEK (214 aa)). Positions 547-626 (MMKMMHAEMP…ELIEAATMSR (80 aa)) are c.

The protein belongs to the heat shock protein 90 family. Homodimer.

It is found in the cytoplasm. Functionally, molecular chaperone. Has ATPase activity. This Chlorobium phaeobacteroides (strain DSM 266 / SMG 266 / 2430) protein is Chaperone protein HtpG.